We begin with the raw amino-acid sequence, 360 residues long: tRNA N6-adenosine threonylcarbamoyltransferase (360 aa).

Residues His-115 and His-119 each coordinate Fe cation. Substrate-binding positions include 137–141 (LVSGG), Asp-170, Gly-183, and Asn-283. Fe cation is bound at residue Asp-311.

This sequence belongs to the KAE1 / TsaD family. Fe(2+) is required as a cofactor.

It is found in the cytoplasm. The enzyme catalyses L-threonylcarbamoyladenylate + adenosine(37) in tRNA = N(6)-L-threonylcarbamoyladenosine(37) in tRNA + AMP + H(+). Functionally, required for the formation of a threonylcarbamoyl group on adenosine at position 37 (t(6)A37) in tRNAs that read codons beginning with adenine. Is involved in the transfer of the threonylcarbamoyl moiety of threonylcarbamoyl-AMP (TC-AMP) to the N6 group of A37, together with TsaE and TsaB. TsaD likely plays a direct catalytic role in this reaction. The sequence is that of tRNA N6-adenosine threonylcarbamoyltransferase from Sinorhizobium medicae (strain WSM419) (Ensifer medicae).